Here is a 186-residue protein sequence, read N- to C-terminus: Large ribosomal subunit protein uL5 (186 aa).

This sequence belongs to the universal ribosomal protein uL5 family. As to quaternary structure, part of the 50S ribosomal subunit; part of the 5S rRNA/L5/L18/L25 subcomplex. Contacts the 5S rRNA and the P site tRNA. Forms a bridge to the 30S subunit in the 70S ribosome.

This is one of the proteins that bind and probably mediate the attachment of the 5S RNA into the large ribosomal subunit, where it forms part of the central protuberance. In the 70S ribosome it contacts protein S13 of the 30S subunit (bridge B1b), connecting the 2 subunits; this bridge is implicated in subunit movement. Contacts the P site tRNA; the 5S rRNA and some of its associated proteins might help stabilize positioning of ribosome-bound tRNAs. This is Large ribosomal subunit protein uL5 from Cereibacter sphaeroides (strain ATCC 17023 / DSM 158 / JCM 6121 / CCUG 31486 / LMG 2827 / NBRC 12203 / NCIMB 8253 / ATH 2.4.1.) (Rhodobacter sphaeroides).